Here is a 217-residue protein sequence, read N- to C-terminus: Large ribosomal subunit protein uL4 (217 aa).

Residues 46 to 103 are disordered; the sequence is KRQGTHATKTRGMVSGGGRKPFRQKGTGRARQGSIRAPHFTGGGTVHGPQPRDYSQRT.

It belongs to the universal ribosomal protein uL4 family. As to quaternary structure, part of the 50S ribosomal subunit.

Functionally, one of the primary rRNA binding proteins, this protein initially binds near the 5'-end of the 23S rRNA. It is important during the early stages of 50S assembly. It makes multiple contacts with different domains of the 23S rRNA in the assembled 50S subunit and ribosome. In terms of biological role, forms part of the polypeptide exit tunnel. The sequence is that of Large ribosomal subunit protein uL4 from Corynebacterium jeikeium (strain K411).